We begin with the raw amino-acid sequence, 294 residues long: ATP synthase gamma chain (294 aa).

This sequence belongs to the ATPase gamma chain family. In terms of assembly, F-type ATPases have 2 components, CF(1) - the catalytic core - and CF(0) - the membrane proton channel. CF(1) has five subunits: alpha(3), beta(3), gamma(1), delta(1), epsilon(1). CF(0) has three main subunits: a, b and c.

Its subcellular location is the cell inner membrane. In terms of biological role, produces ATP from ADP in the presence of a proton gradient across the membrane. The gamma chain is believed to be important in regulating ATPase activity and the flow of protons through the CF(0) complex. The chain is ATP synthase gamma chain from Nitrosomonas europaea (strain ATCC 19718 / CIP 103999 / KCTC 2705 / NBRC 14298).